A 270-amino-acid chain; its full sequence is Hairy and enhancer of split-related protein helt (270 aa).

The disordered stretch occupies residues 1 to 24; the sequence is MNARALYKRPPPVSSSQSEASGKR. Positions 59–114 constitute a bHLH domain; the sequence is KTPVSHKVIEKRRRDRINRCLNELGKTVPMALAKQNSGKLEKAEILEMTVQYLRAL. The Orange domain occupies 136–171; sequence FHYGYHECMKNLVHYLTTVERMETKDTKYARILAFL.

This sequence belongs to the HEY family.

The protein localises to the nucleus. Functionally, transcriptional repressor which binds preferentially to the canonical E box sequence 5'-CACGCG-3'. The polypeptide is Hairy and enhancer of split-related protein helt (helt) (Danio rerio (Zebrafish)).